A 548-amino-acid chain; its full sequence is CTP synthase (548 aa).

Residues 1–270 form an amidoligase domain region; the sequence is MNRRSCAFIF…DTKISALLGC (270 aa). S17 contacts CTP. S17 contributes to the UTP binding site. ATP is bound by residues 18–23 and D75; that span reads SIGKGL. Mg(2+) is bound by residues D75 and E143. Residues 150-152, 190-195, and K227 each bind CTP; these read DIE and KTKPSQ. UTP is bound by residues 190-195 and K227; that span reads KTKPSQ. Positions 305–548 constitute a Glutamine amidotransferase type-1 domain; it reads YSGLCDAYIS…VRAGLLRKYS (244 aa). G356 provides a ligand contact to L-glutamine. C383 serves as the catalytic Nucleophile; for glutamine hydrolysis. L-glutamine-binding positions include 384–387, E407, and R475; that span reads FGFQ. Residues H521 and E523 contribute to the active site.

Belongs to the CTP synthase family. Homotetramer.

It carries out the reaction UTP + L-glutamine + ATP + H2O = CTP + L-glutamate + ADP + phosphate + 2 H(+). The catalysed reaction is L-glutamine + H2O = L-glutamate + NH4(+). It catalyses the reaction UTP + NH4(+) + ATP = CTP + ADP + phosphate + 2 H(+). It participates in pyrimidine metabolism; CTP biosynthesis via de novo pathway; CTP from UDP: step 2/2. Its activity is regulated as follows. Allosterically activated by GTP, when glutamine is the substrate; GTP has no effect on the reaction when ammonia is the substrate. The allosteric effector GTP functions by stabilizing the protein conformation that binds the tetrahedral intermediate(s) formed during glutamine hydrolysis. Inhibited by the product CTP, via allosteric rather than competitive inhibition. Functionally, catalyzes the ATP-dependent amination of UTP to CTP with either L-glutamine or ammonia as the source of nitrogen. Regulates intracellular CTP levels through interactions with the four ribonucleotide triphosphates. This is CTP synthase from Neorickettsia sennetsu (strain ATCC VR-367 / Miyayama) (Ehrlichia sennetsu).